Reading from the N-terminus, the 161-residue chain is Prs ADP-ribosylating toxin (161 aa).

It belongs to the MbcT/ParT/Res family. In terms of assembly, homodimer, forms heterotetrameric ParS(2)-ParT(2) complexes. In terms of processing, consumes NAD(+) and auto-ADP-ribosylates on the tryptic fragment Ala-47-Arg-66 in vitro. Also auto-ADP-ribosylates using NADP(+).

Toxic component of a type II toxin-antitoxin (TA) system. Expression in E.coli inhibits cell growth; bacteriostasis is neutralized by expression of cognate antitoxin ParS. ADP-ribosylates E.coli ribose-phosphate pyrophosphokinase (RPPK, prs) using NAD(+) in vitro; ADP-ribosylates RPPK on 'Lys-182' and 'Ser-202'. Cannot use NADP(+). Also auto-ADP-ribosylates in vitro; in the presence of RPPK auto-ADP-ribosylation decreases. The sequence is that of Prs ADP-ribosylating toxin from Sphingobium sp. (strain YBL2).